Consider the following 97-residue polypeptide: Aspartyl/glutamyl-tRNA(Asn/Gln) amidotransferase subunit C (97 aa).

It belongs to the GatC family. In terms of assembly, heterotrimer of A, B and C subunits.

It catalyses the reaction L-glutamyl-tRNA(Gln) + L-glutamine + ATP + H2O = L-glutaminyl-tRNA(Gln) + L-glutamate + ADP + phosphate + H(+). The enzyme catalyses L-aspartyl-tRNA(Asn) + L-glutamine + ATP + H2O = L-asparaginyl-tRNA(Asn) + L-glutamate + ADP + phosphate + 2 H(+). Its function is as follows. Allows the formation of correctly charged Asn-tRNA(Asn) or Gln-tRNA(Gln) through the transamidation of misacylated Asp-tRNA(Asn) or Glu-tRNA(Gln) in organisms which lack either or both of asparaginyl-tRNA or glutaminyl-tRNA synthetases. The reaction takes place in the presence of glutamine and ATP through an activated phospho-Asp-tRNA(Asn) or phospho-Glu-tRNA(Gln). The sequence is that of Aspartyl/glutamyl-tRNA(Asn/Gln) amidotransferase subunit C from Prochlorococcus marinus (strain SARG / CCMP1375 / SS120).